Consider the following 378-residue polypeptide: Dual-specificity RNA methyltransferase RlmN (378 aa).

Glu-97 (proton acceptor) is an active-site residue. Residues 103 to 341 (EGDRATLCVS…VMVRKTRGDD (239 aa)) form the Radical SAM core domain. The cysteines at positions 110 and 346 are disulfide-linked. 3 residues coordinate [4Fe-4S] cluster: Cys-117, Cys-121, and Cys-124. S-adenosyl-L-methionine-binding positions include 171-172 (GE), Ser-203, 225-227 (SLH), and Asn-303. Cys-346 acts as the S-methylcysteine intermediate in catalysis.

It belongs to the radical SAM superfamily. RlmN family. [4Fe-4S] cluster serves as cofactor.

It is found in the cytoplasm. It catalyses the reaction adenosine(2503) in 23S rRNA + 2 reduced [2Fe-2S]-[ferredoxin] + 2 S-adenosyl-L-methionine = 2-methyladenosine(2503) in 23S rRNA + 5'-deoxyadenosine + L-methionine + 2 oxidized [2Fe-2S]-[ferredoxin] + S-adenosyl-L-homocysteine. The enzyme catalyses adenosine(37) in tRNA + 2 reduced [2Fe-2S]-[ferredoxin] + 2 S-adenosyl-L-methionine = 2-methyladenosine(37) in tRNA + 5'-deoxyadenosine + L-methionine + 2 oxidized [2Fe-2S]-[ferredoxin] + S-adenosyl-L-homocysteine. Functionally, specifically methylates position 2 of adenine 2503 in 23S rRNA and position 2 of adenine 37 in tRNAs. m2A2503 modification seems to play a crucial role in the proofreading step occurring at the peptidyl transferase center and thus would serve to optimize ribosomal fidelity. The polypeptide is Dual-specificity RNA methyltransferase RlmN (Idiomarina loihiensis (strain ATCC BAA-735 / DSM 15497 / L2-TR)).